Reading from the N-terminus, the 487-residue chain is Argininosuccinate lyase (487 aa).

The protein belongs to the lyase 1 family. Argininosuccinate lyase subfamily.

The protein resides in the cytoplasm. It carries out the reaction 2-(N(omega)-L-arginino)succinate = fumarate + L-arginine. It participates in amino-acid biosynthesis; L-arginine biosynthesis; L-arginine from L-ornithine and carbamoyl phosphate: step 3/3. The polypeptide is Argininosuccinate lyase (Methanothrix thermoacetophila (strain DSM 6194 / JCM 14653 / NBRC 101360 / PT) (Methanosaeta thermophila)).